A 965-amino-acid chain; its full sequence is Aminopeptidase N (965 aa).

Topologically, residues 1 to 8 are cytoplasmic; it reads MAKGFYIS. The helical; Signal-anchor for type II membrane protein transmembrane segment at 9–32 threads the bilayer; that stretch reads KALGILAILLGVAAVATIIALSVV. Positions 33–65 are cytosolic Ser/Thr-rich junction; that stretch reads YAQEKNKNAERGTAAPTSPTGPTTTSATTLDQS. Topologically, residues 33-965 are extracellular; that stretch reads YAQEKNKNAE…VVLNWFKDHS (933 aa). The tract at residues 40–65 is disordered; that stretch reads NAERGTAAPTSPTGPTTTSATTLDQS. Residues 44-61 show a composition bias toward low complexity; sequence GTAAPTSPTGPTTTSATT. Residues 66–965 form a metalloprotease region; that stretch reads KPWNRYRLPT…VVLNWFKDHS (900 aa). The N-linked (GlcNAc...) asparagine glycan is linked to Asn125. Residue Tyr173 is modified to Sulfotyrosine. Asn231, Asn260, and Asn316 each carry an N-linked (GlcNAc...) asparagine glycan. Position 349 to 353 (349 to 353) interacts with substrate; that stretch reads GAMEN. His385 is a binding site for Zn(2+). Glu386 acts as the Proton acceptor in catalysis. Residues His389 and Glu408 each coordinate Zn(2+). Residue Tyr416 is modified to Sulfotyrosine. N-linked (GlcNAc...) asparagine glycosylation is found at Asn508, Asn569, Asn624, Asn680, Asn734, and Asn738. Intrachain disulfides connect Cys760–Cys767 and Cys797–Cys833.

Belongs to the peptidase M1 family. In terms of assembly, homodimer. Interacts with SLC6A19. The cofactor is Zn(2+). Post-translationally, sulfated. N- and O-glycosylated. In terms of processing, may undergo proteolysis and give rise to a soluble form.

Its subcellular location is the cell membrane. It catalyses the reaction Release of an N-terminal amino acid, Xaa-|-Yaa- from a peptide, amide or arylamide. Xaa is preferably Ala, but may be most amino acids including Pro (slow action). When a terminal hydrophobic residue is followed by a prolyl residue, the two may be released as an intact Xaa-Pro dipeptide.. Functionally, broad specificity aminopeptidase which plays a role in the final digestion of peptides generated from hydrolysis of proteins by gastric and pancreatic proteases. Also involved in the processing of various peptides including peptide hormones, such as angiotensin III and IV, neuropeptides, and chemokines. May also be involved the cleavage of peptides bound to major histocompatibility complex class II molecules of antigen presenting cells. May have a role in angiogenesis and promote cholesterol crystallization. May have a role in amino acid transport by acting as binding partner of amino acid transporter SLC6A19 and regulating its activity. This is Aminopeptidase N (ANPEP) from Bos taurus (Bovine).